Consider the following 177-residue polypeptide: Adenine phosphoribosyltransferase (177 aa).

It belongs to the purine/pyrimidine phosphoribosyltransferase family. As to quaternary structure, homodimer.

It is found in the cytoplasm. The enzyme catalyses AMP + diphosphate = 5-phospho-alpha-D-ribose 1-diphosphate + adenine. It functions in the pathway purine metabolism; AMP biosynthesis via salvage pathway; AMP from adenine: step 1/1. Catalyzes a salvage reaction resulting in the formation of AMP, that is energically less costly than de novo synthesis. The protein is Adenine phosphoribosyltransferase of Chlorobium luteolum (strain DSM 273 / BCRC 81028 / 2530) (Pelodictyon luteolum).